The following is a 316-amino-acid chain: Pantothenate kinase (316 aa).

An ATP-binding site is contributed by 95–102 (GSVAVGKS).

This sequence belongs to the prokaryotic pantothenate kinase family.

Its subcellular location is the cytoplasm. It catalyses the reaction (R)-pantothenate + ATP = (R)-4'-phosphopantothenate + ADP + H(+). The protein operates within cofactor biosynthesis; coenzyme A biosynthesis; CoA from (R)-pantothenate: step 1/5. The sequence is that of Pantothenate kinase from Shewanella oneidensis (strain ATCC 700550 / JCM 31522 / CIP 106686 / LMG 19005 / NCIMB 14063 / MR-1).